A 461-amino-acid polypeptide reads, in one-letter code: Kynurenine 3-monooxygenase (461 aa).

The next 2 helical transmembrane spans lie at 395 to 415 and 432 to 452; these read GFMN…VTFT and ILSN…AIGI.

It belongs to the aromatic-ring hydroxylase family. KMO subfamily. The cofactor is FAD.

The protein resides in the mitochondrion. The protein localises to the membrane. The catalysed reaction is L-kynurenine + NADPH + O2 + H(+) = 3-hydroxy-L-kynurenine + NADP(+) + H2O. The protein operates within cofactor biosynthesis; NAD(+) biosynthesis; quinolinate from L-kynurenine: step 1/3. Catalyzes the hydroxylation of L-kynurenine (L-Kyn) to form 3-hydroxy-L-kynurenine (L-3OHKyn). Required for synthesis of quinolinic acid. In Caenorhabditis briggsae, this protein is Kynurenine 3-monooxygenase.